Reading from the N-terminus, the 210-residue chain is MTTISAALPSGRLLEDSKAFLKKIGINVKEPAKRELISYENGYAFYFPRAFDVPVYVENGVDIGICGSDVVLERNNEVYIPLELPFGKCRMSIILPENREISFQNMEGYKIATKYPEITKNFFSEKGLKVKILKLNGAVELAAKTGIADAIVDIVDTGNTIKANNLKEAYKIMDISAVLLVNRITQKTKFDFINDLINKAKNYKNGVKGH.

It belongs to the ATP phosphoribosyltransferase family. Short subfamily. Heteromultimer composed of HisG and HisZ subunits.

The protein resides in the cytoplasm. It carries out the reaction 1-(5-phospho-beta-D-ribosyl)-ATP + diphosphate = 5-phospho-alpha-D-ribose 1-diphosphate + ATP. The protein operates within amino-acid biosynthesis; L-histidine biosynthesis; L-histidine from 5-phospho-alpha-D-ribose 1-diphosphate: step 1/9. Functionally, catalyzes the condensation of ATP and 5-phosphoribose 1-diphosphate to form N'-(5'-phosphoribosyl)-ATP (PR-ATP). Has a crucial role in the pathway because the rate of histidine biosynthesis seems to be controlled primarily by regulation of HisG enzymatic activity. The polypeptide is ATP phosphoribosyltransferase (Petrotoga mobilis (strain DSM 10674 / SJ95)).